We begin with the raw amino-acid sequence, 396 residues long: Ribosomal RNA large subunit methyltransferase I (396 aa).

Residues 2–81 (SVRLVLAKGR…ESIDIAFFTR (80 aa)) enclose the PUA domain.

This sequence belongs to the methyltransferase superfamily. RlmI family.

Its subcellular location is the cytoplasm. It carries out the reaction cytidine(1962) in 23S rRNA + S-adenosyl-L-methionine = 5-methylcytidine(1962) in 23S rRNA + S-adenosyl-L-homocysteine + H(+). Its function is as follows. Specifically methylates the cytosine at position 1962 (m5C1962) of 23S rRNA. The protein is Ribosomal RNA large subunit methyltransferase I of Escherichia coli (strain SMS-3-5 / SECEC).